We begin with the raw amino-acid sequence, 245 residues long: Protein crossbronx (245 aa).

Residues 20–177 (QQEYKILAEY…VQESIVESKS (158 aa)) form the UBC core domain.

It belongs to the ubiquitin-conjugating enzyme family. FTS subfamily.

In Drosophila virilis (Fruit fly), this protein is Protein crossbronx (cbx).